Consider the following 536-residue polypeptide: Phosphoenolpyruvate carboxykinase (ATP) (536 aa).

3 residues coordinate substrate: Arg-61, Tyr-195, and Lys-201. Residues Lys-201, His-220, and 236-244 contribute to the ATP site; that span reads GLSGTGKTT. Residues Lys-201 and His-220 each contribute to the Mn(2+) site. A Mn(2+)-binding site is contributed by Asp-257. The ATP site is built by Glu-285, Arg-322, and Thr-447. A substrate-binding site is contributed by Arg-322.

Belongs to the phosphoenolpyruvate carboxykinase (ATP) family. Mn(2+) is required as a cofactor.

It is found in the cytoplasm. It carries out the reaction oxaloacetate + ATP = phosphoenolpyruvate + ADP + CO2. The protein operates within carbohydrate biosynthesis; gluconeogenesis. Its function is as follows. Involved in the gluconeogenesis. Catalyzes the conversion of oxaloacetate (OAA) to phosphoenolpyruvate (PEP) through direct phosphoryl transfer between the nucleoside triphosphate and OAA. In Rhizobium rhizogenes (strain K84 / ATCC BAA-868) (Agrobacterium radiobacter), this protein is Phosphoenolpyruvate carboxykinase (ATP).